The chain runs to 157 residues: Regulator of Ty1 transposition protein 102 (157 aa).

Serine 77 is subject to Phosphoserine. The tract at residues 95–157 is disordered; sequence SLMTSHTKGD…TKESKDVKMN (63 aa). The span at 96-116 shows a compositional bias: polar residues; the sequence is LMTSHTKGDTSKATGAPSANQ. A Phosphoserine modification is found at serine 122. Residues 147 to 157 show a composition bias toward basic and acidic residues; it reads NTKESKDVKMN.

As to quaternary structure, interacts with STH1 and SWI3. Component of the two forms of the RSC complex composed of at least either RSC1 or RSC2, and ARP7, ARP9, LDB7, NPL6, RSC3, RSC30, RSC4, RSC58, RSC6, RSC8, RSC9, SFH1, STH1, HTL1 and probably RTT102. The complexes interact with histone and histone variant components of centromeric chromatin. Probable additional component of the SWI/SNF global transcription activator complex. The 1.14 MDa SWI/SNF complex is composed of 11 different subunits: one copy each of SWI1, SNF2/SWI2, SNF5, SNF12/SWP73, ARP7/SWP61, ARP9/SWP59; two copies each of SWI3, SNF6, SNF11, SWP82; and three copies of TAF14/SWP29.

It localises to the nucleus. Probable component of the chromatin structure-remodeling complex (RSC) which is involved in transcription regulation and nucleosome positioning. RSC is responsible for the transfer of a histone octamer from a nucleosome core particle to naked DNA. The reaction requires ATP and involves an activated RSC-nucleosome intermediate. Remodeling reaction also involves DNA translocation, DNA twist and conformational change. As a reconfigurer of centromeric and flanking nucleosomes, RSC complex is required both for proper kinetochore function in chromosome segregation and, via a PKC1-dependent signaling pathway, for organization of the cellular cytoskeleton. Probable component of the SWI/SNF complex, an ATP-dependent chromatin-remodeling complex, is required for the positive and negative regulation of gene expression of a large number of genes. It changes chromatin structure by altering DNA-histone contacts within a nucleosome, leading eventually to a change in nucleosome position, thus facilitating or repressing binding of gene-specific transcription factors. The protein is Regulator of Ty1 transposition protein 102 (RTT102) of Saccharomyces cerevisiae (strain ATCC 204508 / S288c) (Baker's yeast).